The chain runs to 357 residues: UPF0283 membrane protein HSM_0945 (357 aa).

Helical transmembrane passes span Leu67–Val87, Ile96–Ile116, and Ala213–Ile233.

The protein belongs to the UPF0283 family.

Its subcellular location is the cell inner membrane. The sequence is that of UPF0283 membrane protein HSM_0945 from Histophilus somni (strain 2336) (Haemophilus somnus).